The primary structure comprises 1050 residues: Diacylglycerol kinase iota (1050 aa).

Disordered stretches follow at residues 53 to 74 (PSSS…GSGA), 92 to 111 (AAAA…EKEE), and 328 to 356 (SLKA…ETKG). Residues 92–105 (AAAAAALEEPAAAG) are compositionally biased toward low complexity. A compositionally biased stretch (basic residues) spans 332–347 (SNRKKKRTSFKRKASK). Residues 367-502 (PLMKPLLVFV…DRWNLHVERN (136 aa)) enclose the DAGKc domain. ANK repeat units follow at residues 943-972 (GHCS…AELL) and 979-1008 (TGET…SLRQ). The PDZ-binding signature appears at 1048 to 1050 (TAV).

This sequence belongs to the eukaryotic diacylglycerol kinase family. As to quaternary structure, interacts (via PDZ-binding motif) with DLG4; controls the localization of DGKI to the synapse. Interacts (via PDZ-binding motif) with DLG1. Interacts (via PDZ-binding motif) with DLG2. Interacts (via PDZ-binding motif) with DLG3. May interact with RASGRP3; involved in the regulation of RASGRP3 activity. In brain, expressed in the hippocampus and cerebellum with stronger expression in the Purkinje cell layer (at protein level). Expressed in kidney.

It localises to the cell projection. The protein resides in the axon. Its subcellular location is the dendrite. The protein localises to the presynapse. It is found in the postsynapse. It localises to the postsynaptic density. The protein resides in the synaptic cell membrane. Its subcellular location is the cytoplasmic vesicle. The protein localises to the secretory vesicle. It is found in the synaptic vesicle membrane. It localises to the cytoplasm. The protein resides in the cytosol. Its subcellular location is the nucleus. The catalysed reaction is a 1,2-diacyl-sn-glycerol + ATP = a 1,2-diacyl-sn-glycero-3-phosphate + ADP + H(+). It catalyses the reaction 1,2-di-(9Z-octadecenoyl)-sn-glycerol + ATP = 1,2-di-(9Z-octadecenoyl)-sn-glycero-3-phosphate + ADP + H(+). The enzyme catalyses 1-octadecanoyl-2-(5Z,8Z,11Z,14Z-eicosatetraenoyl)-sn-glycerol + ATP = 1-octadecanoyl-2-(5Z,8Z,11Z,14Z-eicosatetraenoyl)-sn-glycero-3-phosphate + ADP + H(+). It carries out the reaction 1-octadecanoyl-2-(9Z,12Z)-octadecadienoyl-sn-glycerol + ATP = 1-octadecanoyl-2-(9Z,12Z-octadecadienoyl)-sn-glycero-3-phosphate + ADP + H(+). The protein operates within lipid metabolism; glycerolipid metabolism. Functionally, diacylglycerol kinase that converts diacylglycerol/DAG into phosphatidic acid/phosphatidate/PA and regulates the respective levels of these two bioactive lipids. Thereby, acts as a central switch between the signaling pathways activated by these second messengers with different cellular targets and opposite effects in numerous biological processes. Has probably no preference for any of the diacylglycerols in terms of the acyl chain composition, especially for the acyl chain at the sn-2 position. By controlling the diacylglycerol/DAG-mediated activation of RASGRP3, negatively regulates the Rap1 signaling pathway. May play a role in presynaptic diacylglycerol/DAG signaling and control neurotransmitter release during metabotropic glutamate receptor-dependent long-term depression. This chain is Diacylglycerol kinase iota, found in Mus musculus (Mouse).